Consider the following 350-residue polypeptide: Nicotinate-nucleotide--dimethylbenzimidazole phosphoribosyltransferase (350 aa).

Residue Glu317 is the Proton acceptor of the active site.

Belongs to the CobT family.

It catalyses the reaction 5,6-dimethylbenzimidazole + nicotinate beta-D-ribonucleotide = alpha-ribazole 5'-phosphate + nicotinate + H(+). Its pathway is nucleoside biosynthesis; alpha-ribazole biosynthesis; alpha-ribazole from 5,6-dimethylbenzimidazole: step 1/2. In terms of biological role, catalyzes the synthesis of alpha-ribazole-5'-phosphate from nicotinate mononucleotide (NAMN) and 5,6-dimethylbenzimidazole (DMB). In Shewanella sp. (strain MR-7), this protein is Nicotinate-nucleotide--dimethylbenzimidazole phosphoribosyltransferase.